Reading from the N-terminus, the 419-residue chain is Dimethylamine methyltransferase MtbB2 (419 aa).

Residue O308 is a non-standard amino acid, pyrrolysine.

This sequence belongs to the dimethylamine methyltransferase family.

The catalysed reaction is Co(I)-[dimethylamine-specific corrinoid protein] + dimethylamine + H(+) = methyl-Co(III)-[dimethylamine-specific corrinoid protein] + methylamine. It functions in the pathway one-carbon metabolism; methanogenesis from dimethylamine. In terms of biological role, catalyzes the transfer of a methyl group from dimethylamine to the corrinoid cofactor of MtbC. No evidence for expression of this protein has been found after growth under presumably inducing conditions. The protein is Dimethylamine methyltransferase MtbB2 of Methanosarcina barkeri.